The primary structure comprises 280 residues: Cycloeucalenol cycloisomerase (280 aa).

The next 6 helical transmembrane spans lie at 22–42 (LFFL…VVPY), 53–73 (YLLL…LLVG), 89–109 (ANLW…HYFF), 167–187 (FEAA…TIAI), 201–221 (MYRV…PMFF), and 244–264 (AMLV…IVPL).

It is found in the membrane. It carries out the reaction cycloeucalenol = obtusifoliol. Its function is as follows. Converts pentacyclic cyclopropyl sterols to tetracyclic sterols. The chain is Cycloeucalenol cycloisomerase (CPI1) from Arabidopsis thaliana (Mouse-ear cress).